A 321-amino-acid polypeptide reads, in one-letter code: Ribosomal RNA small subunit methyltransferase H (321 aa).

Residues 33-35, Asp-58, Phe-85, Asp-111, and Gln-118 contribute to the S-adenosyl-L-methionine site; that span reads AGH.

Belongs to the methyltransferase superfamily. RsmH family.

It localises to the cytoplasm. It carries out the reaction cytidine(1402) in 16S rRNA + S-adenosyl-L-methionine = N(4)-methylcytidine(1402) in 16S rRNA + S-adenosyl-L-homocysteine + H(+). Its function is as follows. Specifically methylates the N4 position of cytidine in position 1402 (C1402) of 16S rRNA. In Chloroherpeton thalassium (strain ATCC 35110 / GB-78), this protein is Ribosomal RNA small subunit methyltransferase H.